The chain runs to 70 residues: Small ribosomal subunit protein bS21B (70 aa).

It belongs to the bacterial ribosomal protein bS21 family.

The chain is Small ribosomal subunit protein bS21B from Rhizobium etli (strain ATCC 51251 / DSM 11541 / JCM 21823 / NBRC 15573 / CFN 42).